Consider the following 115-residue polypeptide: NADH-ubiquinone oxidoreductase chain 3 (115 aa).

A run of 3 helical transmembrane segments spans residues 4–24, 55–75, and 87–107; these read LITMTVNSALSFCLISIAFWL, FFLVGITFLLFDLEIALLLPL, and TMMVSFMFVSILALGLAYEWL.

Belongs to the complex I subunit 3 family. In terms of assembly, core subunit of respiratory chain NADH dehydrogenase (Complex I) which is composed of 45 different subunits. Interacts with TMEM186. Interacts with TMEM242.

It is found in the mitochondrion inner membrane. The catalysed reaction is a ubiquinone + NADH + 5 H(+)(in) = a ubiquinol + NAD(+) + 4 H(+)(out). Its function is as follows. Core subunit of the mitochondrial membrane respiratory chain NADH dehydrogenase (Complex I) which catalyzes electron transfer from NADH through the respiratory chain, using ubiquinone as an electron acceptor. Essential for the catalytic activity of complex I. This Notiomys edwardsii (Edwards's long-clawed mouse) protein is NADH-ubiquinone oxidoreductase chain 3.